Consider the following 356-residue polypeptide: Methionine import ATP-binding protein MetN (356 aa).

Positions 7–250 (IKLDNIDVTF…PRESLTQDFI (244 aa)) constitute an ABC transporter domain. 43-50 (GYSGAGKS) provides a ligand contact to ATP.

It belongs to the ABC transporter superfamily. Methionine importer (TC 3.A.1.24) family. In terms of assembly, the complex is composed of two ATP-binding proteins (MetN), two transmembrane proteins (MetI) and a solute-binding protein (MetQ).

It localises to the cell membrane. The enzyme catalyses L-methionine(out) + ATP + H2O = L-methionine(in) + ADP + phosphate + H(+). It carries out the reaction D-methionine(out) + ATP + H2O = D-methionine(in) + ADP + phosphate + H(+). Its function is as follows. Part of the ABC transporter complex MetNIQ involved in methionine import. Responsible for energy coupling to the transport system. In Streptococcus agalactiae serotype Ia (strain ATCC 27591 / A909 / CDC SS700), this protein is Methionine import ATP-binding protein MetN.